The chain runs to 57 residues: Protein SinI (57 aa).

In terms of domain architecture, Sin spans 2–40 (KNAKQEHFELDQEWVELMVEAKEANISPEEIRKYLLLNK).

Heterodimer with SinR.

In terms of biological role, acts as an antagonist to SinR. SinI prevents SinR from binding to its target sequence on the gene for AprE. This chain is Protein SinI (sinI), found in Bacillus subtilis (strain 168).